The following is a 134-amino-acid chain: Holo-[acyl-carrier-protein] synthase (134 aa).

Aspartate 8 and glutamate 58 together coordinate Mg(2+).

The protein belongs to the P-Pant transferase superfamily. AcpS family. The cofactor is Mg(2+).

The protein resides in the cytoplasm. It carries out the reaction apo-[ACP] + CoA = holo-[ACP] + adenosine 3',5'-bisphosphate + H(+). Functionally, transfers the 4'-phosphopantetheine moiety from coenzyme A to a Ser of acyl-carrier-protein. This chain is Holo-[acyl-carrier-protein] synthase, found in Acidiphilium cryptum (strain JF-5).